A 151-amino-acid polypeptide reads, in one-letter code: Large ribosomal subunit protein uL15 (151 aa).

The disordered stretch occupies residues 1–58 (MELNQLKSVPKARNHKTKTLGRGHGSGLGKTSGRGQKGQKARKSGLTRPGFEGGQTPL). Over residues 10-21 (PKARNHKTKTLG) the composition is skewed to basic residues. The segment covering 22–36 (RGHGSGLGKTSGRGQ) has biased composition (gly residues).

The protein belongs to the universal ribosomal protein uL15 family. In terms of assembly, part of the 50S ribosomal subunit.

Its function is as follows. Binds to the 23S rRNA. This chain is Large ribosomal subunit protein uL15, found in Mycoplasma pneumoniae (strain ATCC 29342 / M129 / Subtype 1) (Mycoplasmoides pneumoniae).